Here is a 634-residue protein sequence, read N- to C-terminus: 1-deoxy-D-xylulose-5-phosphate synthase (634 aa).

Thiamine diphosphate contacts are provided by residues H74 and A115–S117. D146 contacts Mg(2+). Thiamine diphosphate contacts are provided by residues G147 to A148, N176, Y283, and E365. Position 176 (N176) interacts with Mg(2+).

The protein belongs to the transketolase family. DXPS subfamily. As to quaternary structure, homodimer. Mg(2+) is required as a cofactor. Requires thiamine diphosphate as cofactor.

The enzyme catalyses D-glyceraldehyde 3-phosphate + pyruvate + H(+) = 1-deoxy-D-xylulose 5-phosphate + CO2. The protein operates within metabolic intermediate biosynthesis; 1-deoxy-D-xylulose 5-phosphate biosynthesis; 1-deoxy-D-xylulose 5-phosphate from D-glyceraldehyde 3-phosphate and pyruvate: step 1/1. Catalyzes the acyloin condensation reaction between C atoms 2 and 3 of pyruvate and glyceraldehyde 3-phosphate to yield 1-deoxy-D-xylulose-5-phosphate (DXP). The polypeptide is 1-deoxy-D-xylulose-5-phosphate synthase (Burkholderia thailandensis (strain ATCC 700388 / DSM 13276 / CCUG 48851 / CIP 106301 / E264)).